Reading from the N-terminus, the 223-residue chain is Crossover junction endodeoxyribonuclease RuvC (223 aa).

Active-site residues include aspartate 12, glutamate 73, and aspartate 146. The Mg(2+) site is built by aspartate 12, glutamate 73, and aspartate 146. A disordered region spans residues 182–223 (QGKLGKAKSTLNARNNAQVTGDAQVRAGHPSQFERPDRADPR). The segment covering 190–202 (STLNARNNAQVTG) has biased composition (polar residues). Over residues 213–223 (QFERPDRADPR) the composition is skewed to basic and acidic residues.

The protein belongs to the RuvC family. As to quaternary structure, homodimer which binds Holliday junction (HJ) DNA. The HJ becomes 2-fold symmetrical on binding to RuvC with unstacked arms; it has a different conformation from HJ DNA in complex with RuvA. In the full resolvosome a probable DNA-RuvA(4)-RuvB(12)-RuvC(2) complex forms which resolves the HJ. Requires Mg(2+) as cofactor.

The protein localises to the cytoplasm. It catalyses the reaction Endonucleolytic cleavage at a junction such as a reciprocal single-stranded crossover between two homologous DNA duplexes (Holliday junction).. The RuvA-RuvB-RuvC complex processes Holliday junction (HJ) DNA during genetic recombination and DNA repair. Endonuclease that resolves HJ intermediates. Cleaves cruciform DNA by making single-stranded nicks across the HJ at symmetrical positions within the homologous arms, yielding a 5'-phosphate and a 3'-hydroxyl group; requires a central core of homology in the junction. The consensus cleavage sequence is 5'-(A/T)TT(C/G)-3'. Cleavage occurs on the 3'-side of the TT dinucleotide at the point of strand exchange. HJ branch migration catalyzed by RuvA-RuvB allows RuvC to scan DNA until it finds its consensus sequence, where it cleaves and resolves the cruciform DNA. This Corynebacterium efficiens (strain DSM 44549 / YS-314 / AJ 12310 / JCM 11189 / NBRC 100395) protein is Crossover junction endodeoxyribonuclease RuvC.